The sequence spans 229 residues: UPF0758 protein Fjoh_0413 (229 aa).

One can recognise an MPN domain in the interval Lys107–Phe229. 3 residues coordinate Zn(2+): His178, His180, and Asp191. Positions His178 to Asp191 match the JAMM motif motif.

Belongs to the UPF0758 family.

This Flavobacterium johnsoniae (strain ATCC 17061 / DSM 2064 / JCM 8514 / BCRC 14874 / CCUG 350202 / NBRC 14942 / NCIMB 11054 / UW101) (Cytophaga johnsonae) protein is UPF0758 protein Fjoh_0413.